The chain runs to 41 residues: Large ribosomal subunit protein bL36B (41 aa).

This sequence belongs to the bacterial ribosomal protein bL36 family.

The sequence is that of Large ribosomal subunit protein bL36B from Haemophilus ducreyi (strain 35000HP / ATCC 700724).